The primary structure comprises 381 residues: MSLNMFWFLPTHGDGHYLGTEEGSRPVDHGYLQQIAQAADRLGYTGVLIPTGRSCEDAWLVAASMIPVTQRLKFLVALRPSVTSPTVAARQAATLDRLSNGRALFNLVTGSDPQELAGDGVFLDHSERYEASAEFTQVWRRLLLGETVDFNGKHIHVRGAKLLFPPIQQPYPPLYFGGSSDVAQELAAEQVDLYLTWGEPPELVKEKIEQVRAKAAAHGRKIRFGIRLHVIVRETNDEAWQAAERLISHLDDETIAKAQAAFARTDSVGQQRMAALHNGKRDNLEISPNLWAGVGLVRGGAGTALVGDGPTVAARINEYAALGIDSFVLSGYPHLEEAYRVGELLFPHLDVAIPEIPQPQPLNPQGEAVENDFIPRRVAQS.

The protein belongs to the SsuD family. As to quaternary structure, homotetramer.

The catalysed reaction is an alkanesulfonate + FMNH2 + O2 = an aldehyde + FMN + sulfite + H2O + 2 H(+). Its function is as follows. Catalyzes the desulfonation of aliphatic sulfonates. This chain is Alkanesulfonate monooxygenase, found in Escherichia coli O157:H7.